A 234-amino-acid polypeptide reads, in one-letter code: Probable chemoreceptor glutamine deamidase CheD 1 (234 aa).

It belongs to the CheD family.

The enzyme catalyses L-glutaminyl-[protein] + H2O = L-glutamyl-[protein] + NH4(+). Probably deamidates glutamine residues to glutamate on methyl-accepting chemotaxis receptors (MCPs), playing an important role in chemotaxis. The chain is Probable chemoreceptor glutamine deamidase CheD 1 from Albidiferax ferrireducens (strain ATCC BAA-621 / DSM 15236 / T118) (Rhodoferax ferrireducens).